We begin with the raw amino-acid sequence, 509 residues long: Major envelope glycoprotein (509 aa).

Residues 1–17 (MVRTAVLILLLVRFSEP) form the signal peptide. Residues Asn-34, Asn-156, Asn-194, Asn-351, Asn-381, and Asn-423 are each glycosylated (N-linked (GlcNAc...) asparagine; by host). Residue Ser-479 is the site of O-palmitoyl serine; by host attachment. Residues 480–502 (FMLGHAFSFMLTVGVIIFLFCMV) traverse the membrane as a helical segment. Asn-504 carries an N-linked (GlcNAc...) asparagine; by host glycan.

This sequence belongs to the baculoviridae gp64 family. Palmitoylated.

The protein resides in the virion membrane. Its subcellular location is the host cell membrane. Functionally, envelope phosphoglycoprotein which mediates the fusion of viral and host endosomal membranes leading to virus entry into the host cell. The sequence is that of Major envelope glycoprotein (GP67) from Choristoneura fumiferana nuclear polyhedrosis virus (CfMNPV).